The primary structure comprises 115 residues: MKNKFVELVEKSQLRNDLPEFNPGDSITVNLWIKEGDKQRIQAFKGFVLRKRNRGLHSAFTVRKMSSGMGVERTFQTHSPLIDSIIVEKRADVRRAKLYYMRGLTGKAARIKEKV.

This sequence belongs to the bacterial ribosomal protein bL19 family.

Functionally, this protein is located at the 30S-50S ribosomal subunit interface and may play a role in the structure and function of the aminoacyl-tRNA binding site. This Francisella tularensis subsp. holarctica (strain FTNF002-00 / FTA) protein is Large ribosomal subunit protein bL19.